A 156-amino-acid polypeptide reads, in one-letter code: Transcription antitermination protein NusB (156 aa).

Belongs to the NusB family.

In terms of biological role, involved in transcription antitermination. Required for transcription of ribosomal RNA (rRNA) genes. Binds specifically to the boxA antiterminator sequence of the ribosomal RNA (rrn) operons. This is Transcription antitermination protein NusB from Mycolicibacterium paratuberculosis (strain ATCC BAA-968 / K-10) (Mycobacterium paratuberculosis).